A 132-amino-acid chain; its full sequence is Capsid protein (132 aa).

Belongs to the Leviviricetes capsid protein family. In terms of assembly, homodimer. The capsid protein dimer binds to the viral RNA via an operator hairpin, but also many other RNA sequences in the viral genome.

Its subcellular location is the virion. In terms of biological role, capsid protein self-assembles to form an icosahedral capsid with a T=3 symmetry, about 26 nm in diameter, and consisting of 89 capsid proteins dimers (178 capsid proteins). Involved in viral genome encapsidation through the interaction between a capsid protein dimer and the multiple packaging signals present in the RNA genome. Binding of the capsid proteins to the viral RNA induces a conformational change required for efficient T=3 shell formation. The capsid also contains 1 copy of the A2 maturation protein. Acts as a translational repressor of viral replicase synthesis late in infection. This latter function is the result of capsid protein interaction with an RNA hairpin which contains the replicase ribosome-binding site. The protein is Capsid protein of Enterobacteria phage SP (Bacteriophage SP).